The chain runs to 425 residues: UPF0597 protein KPN78578_43500 (425 aa).

Belongs to the UPF0597 family.

The protein is UPF0597 protein KPN78578_43500 of Klebsiella pneumoniae subsp. pneumoniae (strain ATCC 700721 / MGH 78578).